The following is a 257-amino-acid chain: Imidazole glycerol phosphate synthase subunit HisF (257 aa).

Residues Asp11 and Asp130 contribute to the active site.

The protein belongs to the HisA/HisF family. In terms of assembly, heterodimer of HisH and HisF.

The protein resides in the cytoplasm. It catalyses the reaction 5-[(5-phospho-1-deoxy-D-ribulos-1-ylimino)methylamino]-1-(5-phospho-beta-D-ribosyl)imidazole-4-carboxamide + L-glutamine = D-erythro-1-(imidazol-4-yl)glycerol 3-phosphate + 5-amino-1-(5-phospho-beta-D-ribosyl)imidazole-4-carboxamide + L-glutamate + H(+). It functions in the pathway amino-acid biosynthesis; L-histidine biosynthesis; L-histidine from 5-phospho-alpha-D-ribose 1-diphosphate: step 5/9. In terms of biological role, IGPS catalyzes the conversion of PRFAR and glutamine to IGP, AICAR and glutamate. The HisF subunit catalyzes the cyclization activity that produces IGP and AICAR from PRFAR using the ammonia provided by the HisH subunit. This chain is Imidazole glycerol phosphate synthase subunit HisF, found in Shewanella woodyi (strain ATCC 51908 / MS32).